Consider the following 462-residue polypeptide: Acetate--CoA ligase [ADP-forming] I subunit alpha (462 aa).

The protein belongs to the acetate CoA ligase alpha subunit family. Heterotetramer of two alpha and two beta subunits.

Its subcellular location is the cytoplasm. The enzyme catalyses acetate + ATP + CoA = acetyl-CoA + ADP + phosphate. Its activity is regulated as follows. Activity is dependent on magnesium. Its function is as follows. Catalyzes the reversible formation of acetate and ATP from acetyl-CoA by using ADP and phosphate. Can use other substrates such as isobutyryl-CoA, propionyl-CoA and butyryl-CoA, but not indoleacetyl-CoA, phenylacetyl-CoA or succinyl-CoA. Seems to be involved primarily in the conversion of acetyl-CoA to acetate. Participates in the degradation of branched-chain amino acids via branched-chain-acyl-CoA esters. The sequence is that of Acetate--CoA ligase [ADP-forming] I subunit alpha from Pyrococcus furiosus (strain ATCC 43587 / DSM 3638 / JCM 8422 / Vc1).